A 293-amino-acid chain; its full sequence is NAD kinase (293 aa).

Residue Asp72 is the Proton acceptor of the active site. Residues 72–73 (DG), 146–147 (ND), Arg157, Arg174, Asp176, 187–192 (TAYALS), and Gln247 contribute to the NAD(+) site.

It belongs to the NAD kinase family. Requires a divalent metal cation as cofactor.

The protein resides in the cytoplasm. The catalysed reaction is NAD(+) + ATP = ADP + NADP(+) + H(+). In terms of biological role, involved in the regulation of the intracellular balance of NAD and NADP, and is a key enzyme in the biosynthesis of NADP. Catalyzes specifically the phosphorylation on 2'-hydroxyl of the adenosine moiety of NAD to yield NADP. This is NAD kinase from Chromohalobacter salexigens (strain ATCC BAA-138 / DSM 3043 / CIP 106854 / NCIMB 13768 / 1H11).